The following is a 56-amino-acid chain: MGHSNVWNSHPKNYGAGSRVCRVCGNSHGLIRKYGLMCCRQCFRSDAKDIGFIKYR.

Zn(2+) contacts are provided by Cys-21, Cys-24, Cys-39, and Cys-42.

The protein belongs to the universal ribosomal protein uS14 family. Zn(2+) serves as cofactor.

The polypeptide is Small ribosomal subunit protein uS14 (RPS29) (Triticum aestivum (Wheat)).